We begin with the raw amino-acid sequence, 138 residues long: Putative pre-16S rRNA nuclease (138 aa).

The protein belongs to the YqgF nuclease family.

Its subcellular location is the cytoplasm. Functionally, could be a nuclease involved in processing of the 5'-end of pre-16S rRNA. This chain is Putative pre-16S rRNA nuclease, found in Salmonella dublin (strain CT_02021853).